A 251-amino-acid polypeptide reads, in one-letter code: 3-deoxy-manno-octulosonate cytidylyltransferase (251 aa).

The protein belongs to the KdsB family.

The protein resides in the cytoplasm. It carries out the reaction 3-deoxy-alpha-D-manno-oct-2-ulosonate + CTP = CMP-3-deoxy-beta-D-manno-octulosonate + diphosphate. The protein operates within nucleotide-sugar biosynthesis; CMP-3-deoxy-D-manno-octulosonate biosynthesis; CMP-3-deoxy-D-manno-octulosonate from 3-deoxy-D-manno-octulosonate and CTP: step 1/1. It participates in bacterial outer membrane biogenesis; lipopolysaccharide biosynthesis. In terms of biological role, activates KDO (a required 8-carbon sugar) for incorporation into bacterial lipopolysaccharide in Gram-negative bacteria. The protein is 3-deoxy-manno-octulosonate cytidylyltransferase of Brucella abortus (strain 2308).